A 182-amino-acid polypeptide reads, in one-letter code: Orotate phosphoribosyltransferase (182 aa).

Residues arginine 96, lysine 97, lysine 100, histidine 102, and 122–130 (EDTSTTGGS) contribute to the 5-phospho-alpha-D-ribose 1-diphosphate site. 2 residues coordinate orotate: threonine 126 and arginine 154.

Belongs to the purine/pyrimidine phosphoribosyltransferase family. PyrE subfamily. In terms of assembly, homodimer. It depends on Mg(2+) as a cofactor.

The catalysed reaction is orotidine 5'-phosphate + diphosphate = orotate + 5-phospho-alpha-D-ribose 1-diphosphate. Its pathway is pyrimidine metabolism; UMP biosynthesis via de novo pathway; UMP from orotate: step 1/2. Its function is as follows. Catalyzes the transfer of a ribosyl phosphate group from 5-phosphoribose 1-diphosphate to orotate, leading to the formation of orotidine monophosphate (OMP). The protein is Orotate phosphoribosyltransferase of Streptomyces avermitilis (strain ATCC 31267 / DSM 46492 / JCM 5070 / NBRC 14893 / NCIMB 12804 / NRRL 8165 / MA-4680).